Consider the following 264-residue polypeptide: Purine nucleoside phosphorylase slr1573 (264 aa).

H61, C104, and H121 together coordinate Zn(2+).

It belongs to the purine nucleoside phosphorylase YfiH/LACC1 family. As to quaternary structure, homodimer. It depends on Cu(2+) as a cofactor. Zn(2+) serves as cofactor.

The catalysed reaction is adenosine + phosphate = alpha-D-ribose 1-phosphate + adenine. It catalyses the reaction S-methyl-5'-thioadenosine + phosphate = 5-(methylsulfanyl)-alpha-D-ribose 1-phosphate + adenine. It carries out the reaction inosine + phosphate = alpha-D-ribose 1-phosphate + hypoxanthine. The enzyme catalyses adenosine + H2O + H(+) = inosine + NH4(+). In terms of biological role, purine nucleoside enzyme that catalyzes the phosphorolysis of adenosine and inosine nucleosides, yielding D-ribose 1-phosphate and the respective free bases, adenine and hypoxanthine. Also catalyzes the phosphorolysis of S-methyl-5'-thioadenosine into adenine and S-methyl-5-thio-alpha-D-ribose 1-phosphate. Also has adenosine deaminase activity. This chain is Purine nucleoside phosphorylase slr1573, found in Synechocystis sp. (strain ATCC 27184 / PCC 6803 / Kazusa).